The sequence spans 348 residues: Probable dual-specificity RNA methyltransferase RlmN (348 aa).

E93 serves as the catalytic Proton acceptor. Positions 99-333 constitute a Radical SAM core domain; sequence TEKRLTACLS…VSLRKSRGLD (235 aa). A disulfide bridge links C106 with C338. Residues C113, C117, and C120 each coordinate [4Fe-4S] cluster. S-adenosyl-L-methionine-binding positions include 160–161, S190, 219–221, and N295; these read GE and SLH. The active-site S-methylcysteine intermediate is C338.

Belongs to the radical SAM superfamily. RlmN family. It depends on [4Fe-4S] cluster as a cofactor.

It localises to the cytoplasm. It carries out the reaction adenosine(2503) in 23S rRNA + 2 reduced [2Fe-2S]-[ferredoxin] + 2 S-adenosyl-L-methionine = 2-methyladenosine(2503) in 23S rRNA + 5'-deoxyadenosine + L-methionine + 2 oxidized [2Fe-2S]-[ferredoxin] + S-adenosyl-L-homocysteine. The catalysed reaction is adenosine(37) in tRNA + 2 reduced [2Fe-2S]-[ferredoxin] + 2 S-adenosyl-L-methionine = 2-methyladenosine(37) in tRNA + 5'-deoxyadenosine + L-methionine + 2 oxidized [2Fe-2S]-[ferredoxin] + S-adenosyl-L-homocysteine. Its function is as follows. Specifically methylates position 2 of adenine 2503 in 23S rRNA and position 2 of adenine 37 in tRNAs. This is Probable dual-specificity RNA methyltransferase RlmN from Prochlorococcus marinus (strain MIT 9215).